The following is a 555-amino-acid chain: MKTDVEIAQSAKMQPITEIADRIGIEPNELELYGSYKAKISLDIMKRIEDKPQGKLVLVTAISPTPAGEGKTTTTIGLGQALNKIGKKAIVALREPSLGPVFGIKGGATGGGYAQVVPMEDINLHFTGDIHAVTTAHNLLAALMDNHLHQGNELDIDSRQIVWRRVMDLNERVLRNIVLGLGGRINGVPRESGFDISVASEVMAALCLATDLMDLKERFAKIVVAYSQQGQAITAGDLKAAGSMALLMKDAIKPNLVQTLENTPAFIHGGPFANIAHGANSIVATRLGVKLADYMVTEAGFGADLGAEKFFNIVCRYGKLVPDAVVLVASIRALKHHGGVKKDKLGEENLEALAQGMENLKKHLENIQKFGVPAVVALNEFPSDTSKEIDYVFSQCAAMQTAVSISRVWAQGGEGGIDLAEKLVLATEQGSQFKFLYELNQPLKNKIETICREIYGAGSVKYAAEAKRMLQKYEESGFGDLPVCIAKTQYSLSDNAQLLGRPTGFEVNIRQVKLSAGAGFVVALAGDIMTMPGLGKVPAAENIDIKPDGEIVGLF.

65 to 72 (TPAGEGKT) is a binding site for ATP.

The protein belongs to the formate--tetrahydrofolate ligase family.

The catalysed reaction is (6S)-5,6,7,8-tetrahydrofolate + formate + ATP = (6R)-10-formyltetrahydrofolate + ADP + phosphate. It functions in the pathway one-carbon metabolism; tetrahydrofolate interconversion. The sequence is that of Formate--tetrahydrofolate ligase from Syntrophomonas wolfei subsp. wolfei (strain DSM 2245B / Goettingen).